The sequence spans 308 residues: Putative transposon Ty5-1 protein YCL074W (308 aa).

The protein is Putative transposon Ty5-1 protein YCL074W (TY5A) of Saccharomyces cerevisiae (strain ATCC 204508 / S288c) (Baker's yeast).